The sequence spans 191 residues: Potassium-transporting ATPase KdpC subunit (191 aa).

Residues 13-35 traverse the membrane as a helical segment; sequence VLFTGLCGLAYPLAITGVAQAVL. The tract at residues 112-132 is disordered; it reads SGPVPADAVTSSASGLDPDIS.

Belongs to the KdpC family. As to quaternary structure, the system is composed of three essential subunits: KdpA, KdpB and KdpC.

It localises to the cell inner membrane. Part of the high-affinity ATP-driven potassium transport (or Kdp) system, which catalyzes the hydrolysis of ATP coupled with the electrogenic transport of potassium into the cytoplasm. This subunit acts as a catalytic chaperone that increases the ATP-binding affinity of the ATP-hydrolyzing subunit KdpB by the formation of a transient KdpB/KdpC/ATP ternary complex. The chain is Potassium-transporting ATPase KdpC subunit from Allorhizobium ampelinum (strain ATCC BAA-846 / DSM 112012 / S4) (Agrobacterium vitis (strain S4)).